The following is a 367-amino-acid chain: tRNA pseudouridine synthase D (367 aa).

Residue Asp-80 is the Nucleophile of the active site. Residues Gly-156–Leu-316 enclose the TRUD domain.

The protein belongs to the pseudouridine synthase TruD family.

It catalyses the reaction uridine(13) in tRNA = pseudouridine(13) in tRNA. Responsible for synthesis of pseudouridine from uracil-13 in transfer RNAs. In Xanthomonas campestris pv. campestris (strain B100), this protein is tRNA pseudouridine synthase D.